The sequence spans 339 residues: Glycerol-3-phosphate dehydrogenase [NAD(P)+] (339 aa).

Residues Ser-15, Tyr-16, His-36, and Lys-110 each coordinate NADPH. The sn-glycerol 3-phosphate site is built by Lys-110, Gly-139, and Thr-141. Residue Ala-143 participates in NADPH binding. Residues Lys-195, Asp-248, Ser-258, Arg-259, and Asn-260 each contribute to the sn-glycerol 3-phosphate site. Lys-195 (proton acceptor) is an active-site residue. Arg-259 serves as a coordination point for NADPH. Residues Val-283 and Glu-285 each contribute to the NADPH site.

The protein belongs to the NAD-dependent glycerol-3-phosphate dehydrogenase family.

The protein localises to the cytoplasm. The catalysed reaction is sn-glycerol 3-phosphate + NAD(+) = dihydroxyacetone phosphate + NADH + H(+). It carries out the reaction sn-glycerol 3-phosphate + NADP(+) = dihydroxyacetone phosphate + NADPH + H(+). It functions in the pathway membrane lipid metabolism; glycerophospholipid metabolism. Catalyzes the reduction of the glycolytic intermediate dihydroxyacetone phosphate (DHAP) to sn-glycerol 3-phosphate (G3P), the key precursor for phospholipid synthesis. In Serratia proteamaculans (strain 568), this protein is Glycerol-3-phosphate dehydrogenase [NAD(P)+].